We begin with the raw amino-acid sequence, 494 residues long: Putative bifunctional dihydrofolate reductase-thymidylate synthase (494 aa).

Positions 1–167 (MGIGKDGTLP…IKHSFISFVR (167 aa)) constitute a DHFR domain. Residue 2–8 (GIGKDGT) coordinates NADP(+). Asp-16 lines the substrate pocket. NADP(+) is bound by residues 40 to 42 (RKT) and 61 to 64 (LTRS). Ile-103 contributes to the substrate binding site. 104–111 (GGGEILRQ) is a binding site for NADP(+). Residue Thr-124 coordinates substrate. A thymidylate synthase region spans residues 170 to 494 (KSIAEANDSS…HHKIEMKMAV (325 aa)). Residue Arg-231 coordinates dUMP. Residue Cys-376 is part of the active site. DUMP-binding positions include His-377, 395 to 399 (QRSAD), Asn-407, and 437 to 439 (HVY).

This sequence in the N-terminal section; belongs to the dihydrofolate reductase family. It in the C-terminal section; belongs to the thymidylate synthase family.

The enzyme catalyses (6S)-5,6,7,8-tetrahydrofolate + NADP(+) = 7,8-dihydrofolate + NADPH + H(+). It catalyses the reaction dUMP + (6R)-5,10-methylene-5,6,7,8-tetrahydrofolate = 7,8-dihydrofolate + dTMP. The protein operates within cofactor biosynthesis; tetrahydrofolate biosynthesis; 5,6,7,8-tetrahydrofolate from 7,8-dihydrofolate: step 1/1. Its function is as follows. Bifunctional enzyme. Involved in de novo dTMP biosynthesis. Key enzyme in folate metabolism. Can play two different roles depending on the source of dihydrofolate: de novo synthesis of tetrahydrofolate or recycling of the dihydrofolate released as one of the end products of the TS catalyzed reaction. Catalyzes an essential reaction for de novo glycine and purine synthesis, DNA precursor synthesis, and for the conversion of dUMP to dTMP. This chain is Putative bifunctional dihydrofolate reductase-thymidylate synthase, found in Oryza sativa subsp. japonica (Rice).